An 89-amino-acid polypeptide reads, in one-letter code: MLGGLGKLAAEGLAHRTEKATEGAIHAVEEVVKEVVGHAKETGEKAIAEAIKKAQESGDKKMKEITETVTNTVTNAITHAAESLDKLGQ.

This sequence belongs to the FAM25 family.

The chain is Protein FAM25A from Homo sapiens (Human).